The following is an 83-amino-acid chain: Subtilisin-chymotrypsin inhibitor CI-1A (83 aa).

The segment at 1 to 24 is disordered; that stretch reads MSSMEGSVLKYPEPTEGSIGASSA.

The protein belongs to the protease inhibitor I13 (potato type I serine protease inhibitor) family.

Functionally, inhibits both subtilisin and chymotrypsin. The polypeptide is Subtilisin-chymotrypsin inhibitor CI-1A (Hordeum vulgare (Barley)).